The primary structure comprises 68 residues: Conotoxin Pu5.5 (68 aa).

Residues 1–22 (MRCVPVFIILLVLIASAPSVDA) form the signal peptide. Residues 23–49 (RPQTKDDALASFRDSIKRHLQTLLDAR) constitute a propeptide that is removed on maturation.

It belongs to the conotoxin T superfamily. In terms of processing, contains 2 disulfide bonds that can be either 'C1-C3, C2-C4' or 'C1-C4, C2-C3', since these disulfide connectivities have been observed for conotoxins with cysteine framework V (for examples, see AC P0DQQ7 and AC P81755). Expressed by the venom duct.

Its subcellular location is the secreted. This is Conotoxin Pu5.5 from Conus pulicarius (Flea-bitten cone).